Consider the following 523-residue polypeptide: NAD(P)H-quinone oxidoreductase subunit 2 (523 aa).

14 helical membrane-spanning segments follow: residues 29–49 (AIAP…VDLA), 57–77 (WVPP…AQQW), 94–114 (LAIS…LISW), 123–143 (PIGE…LLCG), 147–167 (LVSV…LAGY), 182–202 (LLVG…LYGL), 223–243 (AALS…AVPF), 255–275 (PTPV…ALAL), 291–311 (LLFT…ALAQ), 317–337 (MLAY…VCGT), 345–365 (VLYM…IILF), 389–409 (LGLS…GFFG), 424–444 (LLVV…ISVI), and 477–497 (IALV…NPLF).

It belongs to the complex I subunit 2 family. In terms of assembly, NDH-1 can be composed of about 15 different subunits; different subcomplexes with different compositions have been identified which probably have different functions.

It localises to the cellular thylakoid membrane. The enzyme catalyses a plastoquinone + NADH + (n+1) H(+)(in) = a plastoquinol + NAD(+) + n H(+)(out). It carries out the reaction a plastoquinone + NADPH + (n+1) H(+)(in) = a plastoquinol + NADP(+) + n H(+)(out). NDH-1 shuttles electrons from an unknown electron donor, via FMN and iron-sulfur (Fe-S) centers, to quinones in the respiratory and/or the photosynthetic chain. The immediate electron acceptor for the enzyme in this species is believed to be plastoquinone. Couples the redox reaction to proton translocation, and thus conserves the redox energy in a proton gradient. Cyanobacterial NDH-1 also plays a role in inorganic carbon-concentration. The protein is NAD(P)H-quinone oxidoreductase subunit 2 of Prochlorococcus marinus (strain MIT 9313).